The chain runs to 102 residues: Aspartyl/glutamyl-tRNA(Asn/Gln) amidotransferase subunit C (102 aa).

It belongs to the GatC family. In terms of assembly, heterotrimer of A, B and C subunits.

The enzyme catalyses L-glutamyl-tRNA(Gln) + L-glutamine + ATP + H2O = L-glutaminyl-tRNA(Gln) + L-glutamate + ADP + phosphate + H(+). It carries out the reaction L-aspartyl-tRNA(Asn) + L-glutamine + ATP + H2O = L-asparaginyl-tRNA(Asn) + L-glutamate + ADP + phosphate + 2 H(+). Functionally, allows the formation of correctly charged Asn-tRNA(Asn) or Gln-tRNA(Gln) through the transamidation of misacylated Asp-tRNA(Asn) or Glu-tRNA(Gln) in organisms which lack either or both of asparaginyl-tRNA or glutaminyl-tRNA synthetases. The reaction takes place in the presence of glutamine and ATP through an activated phospho-Asp-tRNA(Asn) or phospho-Glu-tRNA(Gln). The protein is Aspartyl/glutamyl-tRNA(Asn/Gln) amidotransferase subunit C of Lactobacillus acidophilus (strain ATCC 700396 / NCK56 / N2 / NCFM).